Reading from the N-terminus, the 577-residue chain is Arginine--tRNA ligase (577 aa).

Residues 122-132 (PNVAKEMHVGH) carry the 'HIGH' region motif.

It belongs to the class-I aminoacyl-tRNA synthetase family. As to quaternary structure, monomer.

The protein localises to the cytoplasm. It catalyses the reaction tRNA(Arg) + L-arginine + ATP = L-arginyl-tRNA(Arg) + AMP + diphosphate. In Escherichia coli (strain ATCC 8739 / DSM 1576 / NBRC 3972 / NCIMB 8545 / WDCM 00012 / Crooks), this protein is Arginine--tRNA ligase.